Consider the following 428-residue polypeptide: Serine--tRNA ligase (428 aa).

231–233 (TAE) contacts L-serine. 262–264 (RAE) contributes to the ATP binding site. Position 285 (glutamate 285) interacts with L-serine. 349-352 (EISS) is an ATP binding site. Residue serine 385 coordinates L-serine.

It belongs to the class-II aminoacyl-tRNA synthetase family. Type-1 seryl-tRNA synthetase subfamily. Homodimer. The tRNA molecule binds across the dimer.

The protein localises to the cytoplasm. The enzyme catalyses tRNA(Ser) + L-serine + ATP = L-seryl-tRNA(Ser) + AMP + diphosphate + H(+). It carries out the reaction tRNA(Sec) + L-serine + ATP = L-seryl-tRNA(Sec) + AMP + diphosphate + H(+). Its pathway is aminoacyl-tRNA biosynthesis; selenocysteinyl-tRNA(Sec) biosynthesis; L-seryl-tRNA(Sec) from L-serine and tRNA(Sec): step 1/1. Functionally, catalyzes the attachment of serine to tRNA(Ser). Is also able to aminoacylate tRNA(Sec) with serine, to form the misacylated tRNA L-seryl-tRNA(Sec), which will be further converted into selenocysteinyl-tRNA(Sec). The sequence is that of Serine--tRNA ligase from Methylorubrum populi (strain ATCC BAA-705 / NCIMB 13946 / BJ001) (Methylobacterium populi).